The primary structure comprises 311 residues: E3 ubiquitin-protein ligase RNF126 (311 aa).

Positions 13, 16, 29, and 32 each coordinate Zn(2+). The C4-type zinc-finger motif lies at 13-32; the sequence is CHSCTAEIIPRLPEYTCPRC. Disordered stretches follow at residues 42 to 62 and 95 to 133; these read ETRNSENNSSNNSGTDQNRPS and GTSGPVEEPRDGESRREHQSRQRYGARQPRARLSTRRAA. The span at 101–114 shows a compositional bias: basic and acidic residues; that stretch reads EEPRDGESRREHQS. Residues 123-133 are compositionally biased toward basic residues; that stretch reads PRARLSTRRAA. The RING-type zinc finger occupies 227 to 268; the sequence is CPVCKEDYTVGESVRQLPCNHLFHNDCIIPWLEQHDTCPVCR. The tract at residues 274–311 is disordered; sequence QNTATNPPGLTEMTFSSSSTSSSSSTSPTDENNAANNS. The span at 289–300 shows a compositional bias: low complexity; the sequence is SSSSTSSSSSTS. Over residues 301-311 the composition is skewed to polar residues; it reads PTDENNAANNS.

It is found in the cytoplasm. Its subcellular location is the nucleus. It catalyses the reaction S-ubiquitinyl-[E2 ubiquitin-conjugating enzyme]-L-cysteine + [acceptor protein]-L-lysine = [E2 ubiquitin-conjugating enzyme]-L-cysteine + N(6)-ubiquitinyl-[acceptor protein]-L-lysine.. Its pathway is protein modification; protein ubiquitination. In terms of biological role, E3 ubiquitin-protein ligase that mediates ubiquitination oF target proteins. Depending on the associated E2 ligase, mediates 'Lys-27'-, 'Lys-29'-, 'Lys-48'- and/or 'Lys-63'-linked polyubiquitination of substrates. Part of a BAG6-dependent quality control process ensuring that proteins of the secretory pathway that are mislocalized to the cytosol are degraded by the proteasome. Probably acts by providing the ubiquitin ligase activity associated with the BAG6 complex and be responsible for ubiquitination of the hydrophobic mislocalized proteins and their targeting to the proteasome. The chain is E3 ubiquitin-protein ligase RNF126 from Xenopus tropicalis (Western clawed frog).